A 737-amino-acid chain; its full sequence is Catalase-peroxidase (737 aa).

Residues Met-1 to Lys-32 form a disordered region. The span at Gly-20 to Lys-32 shows a compositional bias: polar residues. Positions Trp-103–Tyr-226 form a cross-link, tryptophyl-tyrosyl-methioninium (Trp-Tyr) (with M-252). The active-site Proton acceptor is the His-104. A cross-link (tryptophyl-tyrosyl-methioninium (Tyr-Met) (with W-103)) is located at residues Tyr-226–Met-252. Residue His-267 coordinates heme b.

Belongs to the peroxidase family. Peroxidase/catalase subfamily. Homodimer or homotetramer. It depends on heme b as a cofactor. Formation of the three residue Trp-Tyr-Met cross-link is important for the catalase, but not the peroxidase activity of the enzyme.

It catalyses the reaction H2O2 + AH2 = A + 2 H2O. It carries out the reaction 2 H2O2 = O2 + 2 H2O. Bifunctional enzyme with both catalase and broad-spectrum peroxidase activity. This Marinomonas sp. (strain MWYL1) protein is Catalase-peroxidase.